The primary structure comprises 170 residues: Extracellular globin-3 (170 aa).

An N-terminal signal peptide occupies residues 1 to 17 (MLRQLLVLVGLAVVCLA). The Globin domain occupies 23 to 169 (CCSEEDHRIV…ILTKISSRLN (147 aa)). Cys24 and Cys156 are disulfide-bonded. His119 contributes to the heme b binding site.

The protein belongs to the globin family. The extracellular hemoglobin of the earthworm consists of 12 subunits that have a hexagonal bilayer structure with a molecular weight near 3.8 million. Each one-twelfth subunit is composed primarily of disulfide linked trimers (chains A, B, and C) and monomers (chain D).

The protein resides in the secreted. The chain is Extracellular globin-3 from Lumbricus terrestris (Common earthworm).